Consider the following 285-residue polypeptide: Phospholipid phosphatase 1 (285 aa).

Over 1-6 (MFDKAR) the chain is Cytoplasmic. The PDZ-binding; involved in localization to the apical cell membrane motif lies at 5–7 (ARL). Residues 7–27 (LPYVALDVLCVVLAGLPFAIL) traverse the membrane as a helical segment. Residues 28–53 (TSRHTPFQRGIFCNDESIKYPYKEDT) are Extracellular-facing. A helical transmembrane segment spans residues 54 to 74 (IPYALLGGIMIPFSIVVMIIG). At 75-94 (ETLSVYCNLLHSNSFIRNNY) the chain is on the cytoplasmic side. Residues 95-115 (IATIYKSIGTFLFGAAASQSL) traverse the membrane as a helical segment. The Extracellular portion of the chain corresponds to 116–165 (TDIAKYSIGRLRPHFLSVCDPDWSKVNCSDGYIEYYVCRGNAEKVKEGRL). Positions 120–128 (KYSIGRLRP) are phosphatase sequence motif I. An N-linked (GlcNAc...) asparagine glycan is attached at asparagine 142. The chain crosses the membrane as a helical span at residues 166 to 186 (SFYSGHSSFSMYCMVFVALYL). Residues 168–171 (YSGH) form a phosphatase sequence motif II region. The active-site Proton donors is histidine 171. Residues 187–199 (QARMKGDWARLLR) are Cytoplasmic-facing. A helical transmembrane segment spans residues 200 to 220 (PTLQFGLVAASIYVGLSRISD). A phosphatase sequence motif III region spans residues 216–227 (SRISDYKHHWSD). Topologically, residues 221-229 (YKHHWSDVL) are extracellular. The Nucleophile role is filled by histidine 223. The chain crosses the membrane as a helical span at residues 230–250 (TGLIQGAIVAILVAVYVSDFF). The Cytoplasmic segment spans residues 251-285 (KARNSPFQERKEEDSHTTLHETPTAGNHYRSNHQP). Basic and acidic residues predominate over residues 260–269 (RKEEDSHTTL). Residues 260–285 (RKEEDSHTTLHETPTAGNHYRSNHQP) form a disordered region.

The protein belongs to the PA-phosphatase related phosphoesterase family. Forms functional homodimers and homooligomers that are not required for substrate recognition and catalytic activity. Can also form heterooligomers with PLPP2 and PLPP3. Post-translationally, N-glycosylated. N-linked sugars are of the complex type. N-glycosylation is not required for the phosphatase activity.

The protein localises to the cell membrane. It is found in the apical cell membrane. Its subcellular location is the membrane raft. The protein resides in the membrane. It localises to the caveola. The catalysed reaction is a 1,2-diacyl-sn-glycero-3-phosphate + H2O = a 1,2-diacyl-sn-glycerol + phosphate. It carries out the reaction 1,2-dihexadecanoyl-sn-glycero-3-phosphate + H2O = 1,2-dihexadecanoyl-sn-glycerol + phosphate. The enzyme catalyses 1,2-di-(9Z-octadecenoyl)-sn-glycero-3-phosphate + H2O = 1,2-di-(9Z-octadecenoyl)-sn-glycerol + phosphate. It catalyses the reaction a monoacyl-sn-glycero-3-phosphate + H2O = a monoacylglycerol + phosphate. The catalysed reaction is (9Z)-octadecenoyl-sn-glycero-3-phosphate + H2O = (9Z-octadecenoyl)-glycerol + phosphate. It carries out the reaction a 1-acyl-sn-glycero-3-phosphate + H2O = a 1-acyl-sn-glycerol + phosphate. The enzyme catalyses 1-(9Z-octadecenoyl)-sn-glycero-3-phosphate + H2O = 1-(9Z-octadecenoyl)-sn-glycerol + phosphate. It catalyses the reaction a 1,2-diacyl-sn-glycerol 3-diphosphate + H2O = a 1,2-diacyl-sn-glycero-3-phosphate + phosphate + H(+). The catalysed reaction is sphing-4-enine 1-phosphate + H2O = sphing-4-enine + phosphate. It carries out the reaction an N-acylsphing-4-enine 1-phosphate + H2O = an N-acylsphing-4-enine + phosphate. The enzyme catalyses N-(octanoyl)-sphing-4-enine-1-phosphate + H2O = N-octanoylsphing-4-enine + phosphate. It catalyses the reaction N-(9Z-octadecenoyl)-ethanolamine phosphate + H2O = N-(9Z-octadecenoyl) ethanolamine + phosphate. The catalysed reaction is 1-hexadecanoyl-2-(9Z-octadecenoyl)-sn-glycero-3-phosphate + H2O = 1-hexadecanoyl-2-(9Z-octadecenoyl)-sn-glycerol + phosphate. Its pathway is lipid metabolism; phospholipid metabolism. Magnesium-independent phospholipid phosphatase. Insensitive to N-ethylmaleimide. Magnesium-independent phospholipid phosphatase of the plasma membrane that catalyzes the dephosphorylation of a variety of glycerolipid and sphingolipid phosphate esters including phosphatidate/PA, lysophosphatidate/LPA, diacylglycerol pyrophosphate/DGPP, sphingosine 1-phosphate/S1P and ceramide 1-phosphate/C1P. Also acts on N-oleoyl ethanolamine phosphate/N-(9Z-octadecenoyl)-ethanolamine phosphate, a potential physiological compound. Through its extracellular phosphatase activity allows both the hydrolysis and the cellular uptake of these bioactive lipid mediators from the milieu, regulating signal transduction in different cellular processes. It is for instance essential for the extracellular hydrolysis of S1P and subsequent conversion into intracellular S1P. Involved in the regulation of inflammation, platelets activation, cell proliferation and migration among other processes. May also have an intracellular activity to regulate phospholipid-mediated signaling pathways. In Cavia porcellus (Guinea pig), this protein is Phospholipid phosphatase 1.